A 264-amino-acid polypeptide reads, in one-letter code: uncharacterized protein (264 aa).

15 to 22 (KGGTGKTT) is a binding site for ATP.

It belongs to the ParA family. MinD subfamily.

This is an uncharacterized protein from Methanocaldococcus jannaschii (strain ATCC 43067 / DSM 2661 / JAL-1 / JCM 10045 / NBRC 100440) (Methanococcus jannaschii).